The following is a 523-amino-acid chain: Nuclear receptor ROR-alpha (523 aa).

Low complexity predominate over residues Met1–Ser26. Residues Met1 to Thr63 form a disordered region. At Lys38 the chain carries N6-methyllysine. Positions Gln48 to Ile57 are enriched in polar residues. 2 consecutive NR C4-type zinc fingers follow at residues Cys73–Cys93 and Cys109–Cys133. The segment at residues Cys73–Met138 is a DNA-binding region (nuclear receptor). Residues Asp154–Thr183 are disordered. At Thr183 the chain carries Phosphothreonine; by MAPK1. A Glycyl lysine isopeptide (Lys-Gly) (interchain with G-Cter in SUMO) cross-link involves residue Lys240. An NR LBD domain is found at Glu272–Leu510. An AF-2 motif is present at residues Leu506–Gly523.

Belongs to the nuclear hormone receptor family. NR1 subfamily. As to quaternary structure, monomer. Interacts (via the DNA-binding domain) with HIF1A; the interaction enhances HIF1A transcription under hypoxia through increasing protein stability. Interacts with CEBPB; the interaction disrupts the interaction CEBPB:EP300. Interacts with the coactivators NCOA2, PPARGC1A (via LXXLL motif), EP300 and MED1. Interacts with the corepressor NCOR1. Interacts with MAGED1 and CTNNB1. Interacts with CRY1 and PER2. Interacts (via AF-2 motif) with PROX1. Interacts with NRIP1. Isoform 4 interacts (via AF-2 motif) with isoform 1 of FOXP3 (via LXXLL motif). Phosphorylation by conventional PKCs in neurons inhibits transcriptional activity. Phosphorylated on Thr-183 by MAPK1/ERK1 in vitro. In terms of processing, sumoylated by SENP1 and SENP2. Sumoylation, promoted by PIAS2, PIAS3, PIAS4 but not PIAS1, enhances the transcriptional activity. Desumoylated by SENP1. Post-translationally, ubiquitinated, leading to its degradation by the proteasome. Proteasomal degradation is required for efficient transcriptional activity and is prevented by HR. Monomethylated at Lys-38 by EZH2, this creates a degron recognized by a DCX (DDB1-DCAF1/VPRBP-CUL4A-RBX1) E3 ubiquitin ligase complex. As to expression, widely expressed in a number of tissues. Expressed in both regulatory T-cells (Treg) and effector T-cells (Teff). Isoform 4: Highly expressed in the central nervous system, including in the cerebellum.

Its subcellular location is the nucleus. Nuclear receptor that binds DNA as a monomer to ROR response elements (RORE) containing a single core motif half-site 5'-AGGTCA-3' preceded by a short A-T-rich sequence. Key regulator of embryonic development, cellular differentiation, immunity, circadian rhythm as well as lipid, steroid, xenobiotics and glucose metabolism. Considered to have intrinsic transcriptional activity, have some natural ligands like oxysterols that act as agonists (25-hydroxycholesterol) or inverse agonists (7-oxygenated sterols), enhancing or repressing the transcriptional activity, respectively. Recruits distinct combinations of cofactors to target genes regulatory regions to modulate their transcriptional expression, depending on the tissue, time and promoter contexts. Regulates genes involved in photoreceptor development including OPN1SW, OPN1SM and ARR3 and skeletal muscle development with MYOD1. Required for proper cerebellum development. Regulates SHH gene expression, among others, to induce granule cells proliferation as well as expression of genes involved in calcium-mediated signal transduction. Regulates the circadian expression of several clock genes, including CLOCK, BMAL1, NPAS2 and CRY1. Competes with NR1D1 for binding to their shared DNA response element on some clock genes such as BMAL1, CRY1 and NR1D1 itself, resulting in NR1D1-mediated repression or RORA-mediated activation of clock genes expression, leading to the circadian pattern of clock genes expression. Therefore influences the period length and stability of the clock. Regulates genes involved in lipid metabolism such as apolipoproteins APOA1, APOA5, APOC3 and PPARG. In liver, has specific and redundant functions with RORC as positive or negative modulator of expression of genes encoding phase I and phase II proteins involved in the metabolism of lipids, steroids and xenobiotics, such as CYP7B1 and SULT2A1. Induces a rhythmic expression of some of these genes. In addition, interplays functionally with NR1H2 and NR1H3 for the regulation of genes involved in cholesterol metabolism. Also involved in the regulation of hepatic glucose metabolism through the modulation of G6PC1 and PCK1. In adipose tissue, plays a role as negative regulator of adipocyte differentiation, probably acting through dual mechanisms. May suppress CEBPB-dependent adipogenesis through direct interaction and PPARG-dependent adipogenesis through competition for DNA-binding. Downstream of IL6 and TGFB and synergistically with RORC isoform 2, is implicated in the lineage specification of uncommitted CD4(+) T-helper (T(H)) cells into T(H)17 cells, antagonizing the T(H)1 program. Probably regulates IL17 and IL17F expression on T(H) by binding to the essential enhancer conserved non-coding sequence 2 (CNS2) in the IL17-IL17F locus. Involved in hypoxia signaling by interacting with and activating the transcriptional activity of HIF1A. May inhibit cell growth in response to cellular stress. May exert an anti-inflammatory role by inducing CHUK expression and inhibiting NF-kappa-B signaling. This Homo sapiens (Human) protein is Nuclear receptor ROR-alpha (RORA).